The chain runs to 579 residues: Pre-mRNA-processing factor 17 (579 aa).

Positions 1-19 (MSAAIAALAASYGSGSGSE) are enriched in low complexity. Disordered stretches follow at residues 1-34 (MSAAIAALAASYGSGSGSESDSDSEGSRCPLPAA) and 204-237 (DVAKPSEEEQKELDEITAKRQKKGKQEEEKPGEE). WD repeat units follow at residues 286 to 326 (GHTK…RCLR), 330 to 369 (GHSKAVRDICFNTAGTQFLSAAYDRYLKLWDTETGQCISR), 371 to 413 (TNRK…IVQE), 416 to 455 (RHLGAVNTIVFVDENRRFVSTSDDKSLRVWEWDIPVDFKY), 459 to 498 (PSMHSMPAVTLSPNGKWLACQSMDNQILIFGAQNRFRLNK), 504 to 545 (GHMV…LYSR), and 548 to 578 (AHDKVCIGAVWHPHETSKVITCGWDGLIKLW).

Component of the catalytic spliceosome C complexes. Component of the postcatalytic spliceosome P complex. Interacts with PPIL1; this interaction leads to CDC40 isomerization. In terms of processing, undergoes isomerization of the peptide bond between Gly-94 and Pro-95. The reaction is catalyzed by PPIL1.

It is found in the nucleus. The protein resides in the nucleus speckle. Its function is as follows. Required for pre-mRNA splicing as component of the activated spliceosome. Plays an important role in embryonic brain development; this function does not require proline peptide bond isomerization. The chain is Pre-mRNA-processing factor 17 (Cdc40) from Mus musculus (Mouse).